Consider the following 197-residue polypeptide: Large ribosomal subunit protein bL17 (197 aa).

A disordered region spans residues 136–197 (RAAKKADAPQ…DAEKSSDTEK (62 aa)). A compositionally biased stretch (acidic residues) spans 148–187 (VADEATDADESVEDEAPAQDDSADEVEAAADETPADDAEA). Positions 188–197 (DAEKSSDTEK) are enriched in basic and acidic residues.

This sequence belongs to the bacterial ribosomal protein bL17 family. As to quaternary structure, part of the 50S ribosomal subunit. Contacts protein L32.

This is Large ribosomal subunit protein bL17 from Beutenbergia cavernae (strain ATCC BAA-8 / DSM 12333 / CCUG 43141 / JCM 11478 / NBRC 16432 / NCIMB 13614 / HKI 0122).